The chain runs to 161 residues: Cyclic pyranopterin monophosphate synthase (161 aa).

Substrate is bound by residues L75–H77 and M113–E114. D128 is an active-site residue.

The protein belongs to the MoaC family. As to quaternary structure, homohexamer; trimer of dimers.

It catalyses the reaction (8S)-3',8-cyclo-7,8-dihydroguanosine 5'-triphosphate = cyclic pyranopterin phosphate + diphosphate. It participates in cofactor biosynthesis; molybdopterin biosynthesis. Functionally, catalyzes the conversion of (8S)-3',8-cyclo-7,8-dihydroguanosine 5'-triphosphate to cyclic pyranopterin monophosphate (cPMP). The polypeptide is Cyclic pyranopterin monophosphate synthase (Cupriavidus pinatubonensis (strain JMP 134 / LMG 1197) (Cupriavidus necator (strain JMP 134))).